The chain runs to 628 residues: Inactive sodium-dependent neutral amino acid transporter B(0)AT3 (628 aa).

Residues M1–Q26 lie on the Cytoplasmic side of the membrane. Residues Y27–L47 form a helical membrane-spanning segment. Residues C48 to Y51 lie on the Extracellular side of the membrane. Residues G52 to V74 form a helical membrane-spanning segment. Residues E75–G88 are Cytoplasmic-facing. The helical transmembrane segment at V89–I111 threads the bilayer. Residues S112 to S178 are Extracellular-facing. N-linked (GlcNAc...) asparagine glycans are attached at residues N144, N168, and N174. The chain crosses the membrane as a helical span at residues I179–G201. Over I202–K207 the chain is Cytoplasmic. A helical transmembrane segment spans residues V208–L230. Topologically, residues P231–V253 are extracellular. Residues W254–A276 form a helical membrane-spanning segment. Topologically, residues S277 to D288 are cytoplasmic. Residues A289 to L311 traverse the membrane as a helical segment. Residues G312–A399 lie on the Extracellular side of the membrane. N354 carries an N-linked (GlcNAc...) asparagine glycan. The helical transmembrane segment at P400–V422 threads the bilayer. Over E423–E442 the chain is Cytoplasmic. The helical transmembrane segment at A443 to N465 threads the bilayer. Over Y466 to F474 the chain is Extracellular. The chain crosses the membrane as a helical span at residues A475–M497. The Cytoplasmic portion of the chain corresponds to K498–R517. A helical membrane pass occupies residues L518 to W540. Over K541–R568 the chain is Extracellular. A helical transmembrane segment spans residues A569–L591. Residues T592–R628 lie on the Cytoplasmic side of the membrane. The segment at D602 to R628 is disordered.

It belongs to the sodium:neurotransmitter symporter (SNF) (TC 2.A.22) family. SLC6A18 subfamily. In terms of tissue distribution, abundantly expressed in kidney, but not in intestine.

The protein localises to the membrane. In terms of biological role, does not show neutral amino acid transporter activity. This is Inactive sodium-dependent neutral amino acid transporter B(0)AT3 from Homo sapiens (Human).